A 1704-amino-acid chain; its full sequence is MVVLRQLRLLLWKNYTLKKRKVLVTVLELFLPLLFSGILIWLRLKIQSENVPNATVYPDQHIQELPLFFSFPPPGGSWELAYVPSHSDAARTITEAVRREFMIKMRVHGFSSEKDFEDYVRYDNHSSNVLAAVVFEHTFNHSKDPLPLAVRYHLRFSYTRRNYMWTQTGNLFLKETEGWHTASLFPLFPSPGPREPSSPDGGEPGYIREGFLAVQHAVDKAIMHYHANASAHQLFQKLTVITKRFPFPPYISDPFLIAIQYQLPLLLMLSFTYTSLTIIRAVVQEKEKKLKEYMRMMGLSSWLHWSAWFLMFLLFSLIVVSFMTLLFCVKVKKDIAVLSNSDPSLVLAFLLCFAISSISFSFMVSTFFSKANMAATVGGFLYFFTYTPYFFVAPRYNWMTLSQKLLSCLLSNVAMAMGAQLIGKFEAKGTGIQWCDLLNPVNVDDDFCFGQVLGMLLLDSVLYGLVTWYVEAVFPGQFGVPQPWYFFLMPSYWCGNPRTVVGKEEEGGDPEKAFRTEYFEAEPEDLAAGIKIKHLSKVFQVGNKDKMGIRDLTLNLYEGQITVLLGHNGAGKTTTMSMLTGLFPPTSGHAYIRGYEISQDMVQIRKSLGLCPQHDVLFDNLTVAEHLYFYAQLKGLSVQKCPEEVKQMLHTLGLEDKRDSRSKFLSGGMKRKLAIGIALIAGSKVLMLDEPTSGMDAVSRRAIWDLLQQQKSDRTVLLTTHFMDEADLLGDRIAILAKGELQCCGSSLFLKQKYGAGYHMTLVKEPHCNPEGISQLVHHHVPNAMLESHAGAELSFILPKESTHRFESLFAKLEKKQKELGIASFGASVTTMEEVFLRVGKLVDTSMDIQAIQLPALQYQHERRASDWALDSNLCGVMDPTNGIGALIEEEEVLVKLNTGLALHCQQFWAMFLKKAAYSWREWRMVAAQILVPVTCLTLALLAINYTSEIFDDPPLKLSLNEYGTTVVPFSVPGTSRLGQQLSEHLRDMLQAERQEPREVLGDLEEFLVFRASVEGGGFNERCLVATSFKDSGERTVVTALFNNQAYHSPATALAIVDNLLFKLLCGPRASIEISNYPQPRSTLQVAKDQFNEGRKGFDIALNLLIAMAFLASTFSILAVSERAVQAKHVQFVSGVHVATFWLSALLWDLISFLVPSLLLLVVFRAFDVHAFTRDGHMADLLLLLMLYGWAIIPLMYLLSFFFSAASTAYTRLTIFNILSGIATFIVVTIMRIPAVKLEELSRTLDHVFLVLPNHCLGMAVSNFYENYETRRYCTSSEVATHYCKKYNIQYQENFYAWSTPGIGKFVTSMAASGGIYLTLLFLIETNLLWRLRTFVCAFRRRWTLAELQNRTSVLPEDQDVADERSRVLVPSLDSMLDTPLIINELSKVYDQRAPLLAVDRISLAVQKGECFGLLGFNGAGKTTTFKMLTGEETITSGDAFVGGYSISSDIGKVRQRMGYCPQFDALLDHMTGREMLVMYARLRGIPERLIDACVENTLRGLLLEPHANKLVKTYSGGNKRKLSTGIALIGEPAVIFLDEPSTGMDPVARRLLWDTVARARESGKAIVITSHSMEECEALCTRLAIMVQGQFKCLGSPQHLKSKFGSGYSLQAKVRSEGKQEVLEEFKAFVDLTFPGSVLEDEHQDMVHYHLPGCDLSWAKVFGILEKAKEKYGVDDYSVSQISLEQVFLSFAHLQPPTTEDGR.

Residue Asn14 is glycosylated (N-linked (GlcNAc...) asparagine). Residues 22–42 traverse the membrane as a helical segment; that stretch reads VLVTVLELFLPLLFSGILIWL. Asn53, Asn124, Asn140, and Asn228 each carry an N-linked (GlcNAc...) asparagine glycan. Transmembrane regions (helical) follow at residues 251–271, 307–327, 344–364, 373–393, and 405–425; these read ISDPFLIAIQYQLPLLLMLSF, AWFLMFLLFSLIVVSFMTLLF, SLVLAFLLCFAISSISFSFMV, MAATVGGFLYFFTYTPYFFVA, and LLSCLLSNVAMAMGAQLIGKF. The 234-residue stretch at 530–763 folds into the ABC transporter 1 domain; that stretch reads IKIKHLSKVF…YGAGYHMTLV (234 aa). Residue 566–573 coordinates ATP; the sequence is GHNGAGKT. N-linked (GlcNAc...) asparagine glycosylation is found at Asn620 and Asn945. 6 helical membrane-spanning segments follow: residues 1100–1120, 1144–1164, 1183–1203, 1213–1233, 1245–1265, and 1310–1330; these read IALNLLIAMAFLASTFSILAV, SALLWDLISFLVPSLLLLVVF, LLLMLYGWAIIPLMYLLSFFF, LTIFNILSGIATFIVVTIMRI, LDHVFLVLPNHCLGMAVSNFY, and MAASGGIYLTLLFLIETNLLW. Asn1350 is a glycosylation site (N-linked (GlcNAc...) asparagine). The ABC transporter 2 domain maps to 1381–1614; it reads LIINELSKVY…FGSGYSLQAK (234 aa). 1416–1423 contacts ATP; the sequence is GFNGAGKT.

In terms of assembly, homooligomer; disulfide-linked. N-glycosylated. Localization at intracellular vesicles is accompanied by processing of oligosaccharide from high mannose type to complex type. N-linked glycosylation at Asn-124 and Asn-140 is required for stability and efficient anterograde trafficking and prevents from proteasomal degradation. Post-translationally, proteolytically cleaved by CTSL and to a lower extent by CTSB within multivesicular bodies (MVB) and lamellar bodies (LB) leading to a mature form of 150 kDa. As to expression, highly expressed in lung, moderately expressed in stomach, intestine, and kidney and weakly expressed in thyroid, brain, liver, spleen, heart, testis, and thymus.

It is found in the endosome. The protein resides in the multivesicular body membrane. The protein localises to the cytoplasmic vesicle membrane. Its subcellular location is the late endosome membrane. It localises to the lysosome membrane. The catalysed reaction is ATP + H2O + xenobioticSide 1 = ADP + phosphate + xenobioticSide 2.. The enzyme catalyses a 1,2-diacyl-sn-glycero-3-phosphocholine(in) + ATP + H2O = a 1,2-diacyl-sn-glycero-3-phosphocholine(out) + ADP + phosphate + H(+). It carries out the reaction ATP + H2O + phospholipidSide 1 = ADP + phosphate + phospholipidSide 2.. It catalyses the reaction 1,2-dihexadecanoyl-sn-glycero-3-phosphocholine(in) + ATP + H2O = 1,2-dihexadecanoyl-sn-glycero-3-phosphocholine(out) + ADP + phosphate + H(+). The catalysed reaction is cholesterol(in) + ATP + H2O = cholesterol(out) + ADP + phosphate + H(+). The enzyme catalyses a 1,2-diacyl-sn-glycero-3-phospho-(1'-sn-glycerol)(in) + ATP + H2O = a 1,2-diacyl-sn-glycero-3-phospho-(1'-sn-glycerol)(out) + ADP + phosphate + H(+). Functionally, catalyzes the ATP-dependent transport of phospholipids such as phosphatidylcholine and phosphoglycerol from the cytoplasm into the lumen side of lamellar bodies, in turn participates in the lamellar bodies biogenesis and homeostasis of pulmonary surfactant. Transports preferentially phosphatidylcholine containing short acyl chains. In addition plays a role as an efflux transporter of miltefosine across macrophage membranes and free cholesterol (FC) through intralumenal vesicles by removing FC from the cell as a component of surfactant and protects cells from free cholesterol toxicity. The polypeptide is Phospholipid-transporting ATPase ABCA3 (Rattus norvegicus (Rat)).